A 307-amino-acid chain; its full sequence is Fructokinase (307 aa).

The protein belongs to the carbohydrate kinase PfkB family.

It carries out the reaction D-fructose + ATP = D-fructose 6-phosphate + ADP + H(+). The sequence is that of Fructokinase (scrK) from Vibrio alginolyticus.